A 65-amino-acid polypeptide reads, in one-letter code: Large ribosomal subunit protein bL35 (65 aa).

It belongs to the bacterial ribosomal protein bL35 family.

The sequence is that of Large ribosomal subunit protein bL35 from Heliobacterium modesticaldum (strain ATCC 51547 / Ice1).